The sequence spans 284 residues: Pantothenate synthetase (284 aa).

An ATP-binding site is contributed by 30-37 (MGYLHEGH). The active-site Proton donor is the His-37. Position 61 (Gln-61) interacts with (R)-pantoate. Gln-61 serves as a coordination point for beta-alanine. Position 147-150 (147-150 (GQKD)) interacts with ATP. Residue Gln-153 coordinates (R)-pantoate. Residues Val-176 and 184–187 (KSSR) each bind ATP.

Belongs to the pantothenate synthetase family. In terms of assembly, homodimer.

The protein resides in the cytoplasm. The catalysed reaction is (R)-pantoate + beta-alanine + ATP = (R)-pantothenate + AMP + diphosphate + H(+). The protein operates within cofactor biosynthesis; (R)-pantothenate biosynthesis; (R)-pantothenate from (R)-pantoate and beta-alanine: step 1/1. Functionally, catalyzes the condensation of pantoate with beta-alanine in an ATP-dependent reaction via a pantoyl-adenylate intermediate. This is Pantothenate synthetase from Lysinibacillus sphaericus (strain C3-41).